Here is a 249-residue protein sequence, read N- to C-terminus: 5'-nucleotidase SurE (249 aa).

Residues D8, D9, S39, and N91 each contribute to the a divalent metal cation site.

The protein belongs to the SurE nucleotidase family. A divalent metal cation serves as cofactor.

It is found in the cytoplasm. The enzyme catalyses a ribonucleoside 5'-phosphate + H2O = a ribonucleoside + phosphate. In terms of biological role, nucleotidase that shows phosphatase activity on nucleoside 5'-monophosphates. The chain is 5'-nucleotidase SurE from Pseudomonas paraeruginosa (strain DSM 24068 / PA7) (Pseudomonas aeruginosa (strain PA7)).